We begin with the raw amino-acid sequence, 144 residues long: Glycophorin-A (144 aa).

The segment covering 1–25 (SSTTVPATHTSSSSLGPEQYVSSQS) has biased composition (polar residues). The tract at residues 1 to 55 (SSTTVPATHTSSSSLGPEQYVSSQSNDKHTSDSHPTPTSAHEVTTEFSGRTHYPP) is disordered. S2 is a glycosylation site (O-linked (GalNAc...) serine). Residues T3, T4, T8, and T10 are each glycosylated (O-linked (GalNAc...) threonine). S11, S12, S13, S14, S22, and S23 each carry an O-linked (GalNAc...) serine glycan. O-linked (GalNAc...) threonine glycans are attached at residues T30, T36, T38, T44, and T45. The segment covering 33 to 48 (SHPTPTSAHEVTTEFS) has biased composition (polar residues). A glycan (O-linked (GalNAc...) serine) is linked at S48. O-linked (GalNAc...) threonine glycosylation occurs at T51. The chain crosses the membrane as a helical span at residues 70-92 (LVIALIIFGVMAGVIGTILFISY). Residues 101–144 (SESDVQPLPPPDAEVPLSSVEIEDPEETDELNSFTKPNQERNES) are disordered. S118 bears the Phosphoserine mark. Positions 121-130 (EIEDPEETDE) are enriched in acidic residues.

This sequence belongs to the glycophorin-A family. Homodimer. Component of the ankyrin-1 complex in the erythrocyte, composed of ANK1, RHCE, RHAG, SLC4A1, EPB42, GYPA, GYPB and AQP1. Interacts with SLC4A1; a GYPA monomer is bound at each end of the SLC4A1 dimer forming a heterotetramer.

The protein localises to the membrane. Component of the ankyrin-1 complex, a multiprotein complex involved in the stability and shape of the erythrocyte membrane. Glycophorin A is the major intrinsic membrane protein of the erythrocyte. The N-terminal glycosylated segment, which lies outside the erythrocyte membrane, has MN blood group receptors. Appears to be important for the function of SLC4A1 and is required for high activity of SLC4A1. May be involved in translocation of SLC4A1 to the plasma membrane. The protein is Glycophorin-A of Macaca fuscata fuscata (Japanese macaque).